The following is a 201-amino-acid chain: ATP-dependent Clp protease proteolytic subunit (201 aa).

Catalysis depends on serine 103, which acts as the Nucleophile. Histidine 128 is an active-site residue.

The protein belongs to the peptidase S14 family. As to quaternary structure, fourteen ClpP subunits assemble into 2 heptameric rings which stack back to back to give a disk-like structure with a central cavity, resembling the structure of eukaryotic proteasomes.

It is found in the cytoplasm. The enzyme catalyses Hydrolysis of proteins to small peptides in the presence of ATP and magnesium. alpha-casein is the usual test substrate. In the absence of ATP, only oligopeptides shorter than five residues are hydrolyzed (such as succinyl-Leu-Tyr-|-NHMec, and Leu-Tyr-Leu-|-Tyr-Trp, in which cleavage of the -Tyr-|-Leu- and -Tyr-|-Trp bonds also occurs).. Functionally, cleaves peptides in various proteins in a process that requires ATP hydrolysis. Has a chymotrypsin-like activity. Plays a major role in the degradation of misfolded proteins. The protein is ATP-dependent Clp protease proteolytic subunit of Bordetella avium (strain 197N).